Reading from the N-terminus, the 879-residue chain is Valine--tRNA ligase (879 aa).

The 'HIGH' region motif lies at 43 to 53 (PNVTGVLHMGH). Residues 534-538 (KMSKS) carry the 'KMSKS' region motif. Lysine 537 contacts ATP. Residues 807–878 (LGNMIDVEAE…LKESIAALKK (72 aa)) are a coiled coil.

Belongs to the class-I aminoacyl-tRNA synthetase family. ValS type 1 subfamily. In terms of assembly, monomer.

It is found in the cytoplasm. The catalysed reaction is tRNA(Val) + L-valine + ATP = L-valyl-tRNA(Val) + AMP + diphosphate. Catalyzes the attachment of valine to tRNA(Val). As ValRS can inadvertently accommodate and process structurally similar amino acids such as threonine, to avoid such errors, it has a 'posttransfer' editing activity that hydrolyzes mischarged Thr-tRNA(Val) in a tRNA-dependent manner. The polypeptide is Valine--tRNA ligase (Bacteroides thetaiotaomicron (strain ATCC 29148 / DSM 2079 / JCM 5827 / CCUG 10774 / NCTC 10582 / VPI-5482 / E50)).